We begin with the raw amino-acid sequence, 660 residues long: tRNA 5-methylaminomethyl-2-thiouridine biosynthesis bifunctional protein MnmC (660 aa).

Positions 1–242 are tRNA (mnm(5)s(2)U34)-methyltransferase; the sequence is MTDRIVPATL…KRAMLVGEFA (242 aa). The interval 266–660 is FAD-dependent cmnm(5)s(2)U34 oxidoreductase; the sequence is IGAGLAGCAV…VRALRHGRVA (395 aa).

It in the N-terminal section; belongs to the methyltransferase superfamily. tRNA (mnm(5)s(2)U34)-methyltransferase family. The protein in the C-terminal section; belongs to the DAO family. It depends on FAD as a cofactor.

The protein resides in the cytoplasm. The catalysed reaction is 5-aminomethyl-2-thiouridine(34) in tRNA + S-adenosyl-L-methionine = 5-methylaminomethyl-2-thiouridine(34) in tRNA + S-adenosyl-L-homocysteine + H(+). Catalyzes the last two steps in the biosynthesis of 5-methylaminomethyl-2-thiouridine (mnm(5)s(2)U) at the wobble position (U34) in tRNA. Catalyzes the FAD-dependent demodification of cmnm(5)s(2)U34 to nm(5)s(2)U34, followed by the transfer of a methyl group from S-adenosyl-L-methionine to nm(5)s(2)U34, to form mnm(5)s(2)U34. This Burkholderia mallei (strain NCTC 10247) protein is tRNA 5-methylaminomethyl-2-thiouridine biosynthesis bifunctional protein MnmC.